Reading from the N-terminus, the 210-residue chain is 2-hydroxy-3-keto-5-methylthiopentenyl-1-phosphate phosphatase (210 aa).

It belongs to the HAD-like hydrolase superfamily. MtnX family.

The catalysed reaction is 2-hydroxy-5-methylsulfanyl-3-oxopent-1-enyl phosphate + H2O = 1,2-dihydroxy-5-(methylsulfanyl)pent-1-en-3-one + phosphate. Its pathway is amino-acid biosynthesis; L-methionine biosynthesis via salvage pathway; L-methionine from S-methyl-5-thio-alpha-D-ribose 1-phosphate: step 4/6. Its function is as follows. Dephosphorylates 2-hydroxy-3-keto-5-methylthiopentenyl-1-phosphate (HK-MTPenyl-1-P) yielding 1,2-dihydroxy-3-keto-5-methylthiopentene (DHK-MTPene). The polypeptide is 2-hydroxy-3-keto-5-methylthiopentenyl-1-phosphate phosphatase (Microcystis aeruginosa (strain NIES-843 / IAM M-2473)).